Consider the following 240-residue polypeptide: Uridylate kinase (240 aa).

13–16 (KASG) contributes to the ATP binding site. Residue glycine 55 participates in UMP binding. Residues glycine 56 and arginine 60 each contribute to the ATP site. Residues aspartate 75 and 136–143 (TGNPFFTT) contribute to the UMP site. The ATP site is built by threonine 163, glutamine 164, tyrosine 169, and aspartate 172.

It belongs to the UMP kinase family. In terms of assembly, homohexamer.

The protein resides in the cytoplasm. The catalysed reaction is UMP + ATP = UDP + ADP. It functions in the pathway pyrimidine metabolism; CTP biosynthesis via de novo pathway; UDP from UMP (UMPK route): step 1/1. Its activity is regulated as follows. Inhibited by UTP. In terms of biological role, catalyzes the reversible phosphorylation of UMP to UDP. The protein is Uridylate kinase of Mesorhizobium japonicum (strain LMG 29417 / CECT 9101 / MAFF 303099) (Mesorhizobium loti (strain MAFF 303099)).